A 215-amino-acid polypeptide reads, in one-letter code: Superoxide dismutase [Mn] (215 aa).

His-27, His-83, Asp-170, and His-174 together coordinate Mn(2+).

Belongs to the iron/manganese superoxide dismutase family. In terms of assembly, homodimer. Requires Mn(2+) as cofactor.

It catalyses the reaction 2 superoxide + 2 H(+) = H2O2 + O2. Functionally, destroys superoxide anion radicals which are normally produced within the cells and which are toxic to biological systems. The chain is Superoxide dismutase [Mn] (sodA) from Haemophilus influenzae (strain ATCC 51907 / DSM 11121 / KW20 / Rd).